A 274-amino-acid polypeptide reads, in one-letter code: NAD-dependent protein deacetylase (274 aa).

In terms of domain architecture, Deacetylase sirtuin-type spans 1–274 (MDSRMSDLQA…CDEVLAEVVS (274 aa)). NAD(+) contacts are provided by residues 26–46 (GAGC…GQWK) and 104–107 (QNVD). Catalysis depends on H122, which acts as the Proton acceptor. Zn(2+) contacts are provided by C130, C133, C181, and C184. Residues 221–223 (GSS), 247–249 (NLG), and C265 contribute to the NAD(+) site.

This sequence belongs to the sirtuin family. Class II subfamily. Requires Zn(2+) as cofactor.

It localises to the cytoplasm. The catalysed reaction is N(6)-acetyl-L-lysyl-[protein] + NAD(+) + H2O = 2''-O-acetyl-ADP-D-ribose + nicotinamide + L-lysyl-[protein]. Functionally, NAD-dependent protein deacetylase which modulates the activities of several enzymes which are inactive in their acetylated form. This chain is NAD-dependent protein deacetylase, found in Bordetella bronchiseptica (strain ATCC BAA-588 / NCTC 13252 / RB50) (Alcaligenes bronchisepticus).